The sequence spans 150 residues: D-aminoacyl-tRNA deacylase (150 aa).

The Gly-cisPro motif, important for rejection of L-amino acids motif lies at 133 to 134 (GP).

This sequence belongs to the DTD family. As to quaternary structure, homodimer.

The protein localises to the cytoplasm. It carries out the reaction glycyl-tRNA(Ala) + H2O = tRNA(Ala) + glycine + H(+). The catalysed reaction is a D-aminoacyl-tRNA + H2O = a tRNA + a D-alpha-amino acid + H(+). An aminoacyl-tRNA editing enzyme that deacylates mischarged D-aminoacyl-tRNAs. Also deacylates mischarged glycyl-tRNA(Ala), protecting cells against glycine mischarging by AlaRS. Acts via tRNA-based rather than protein-based catalysis; rejects L-amino acids rather than detecting D-amino acids in the active site. By recycling D-aminoacyl-tRNA to D-amino acids and free tRNA molecules, this enzyme counteracts the toxicity associated with the formation of D-aminoacyl-tRNA entities in vivo and helps enforce protein L-homochirality. This Kocuria rhizophila (strain ATCC 9341 / DSM 348 / NBRC 103217 / DC2201) protein is D-aminoacyl-tRNA deacylase.